A 419-amino-acid chain; its full sequence is Glycine, glutamate and proline-rich protein (419 aa).

The first 16 residues, 1–16, serve as a signal peptide directing secretion; the sequence is MKCLVALFLSLSLVAC. A disordered region spans residues 74 to 152; it reads VERESEEAEG…VDMCAGESRR (79 aa). Residues 76 to 85 show a composition bias toward acidic residues; it reads RESEEAEGEG. Over residues 86-130 the composition is skewed to basic and acidic residues; that stretch reads TDGRGGGEGEREGWGGEREGGEGEREGGEGEREGREGEREGKSSE.

This sequence in the C-terminal section; belongs to the glycosyl hydrolase 23 family. As to expression, component of the acid-insoluble organic matrix of calcified layers of the shell (at protein level).

It is found in the secreted. The polypeptide is Glycine, glutamate and proline-rich protein (Lottia gigantea (Giant owl limpet)).